We begin with the raw amino-acid sequence, 462 residues long: General transcription factor IIH subunit 4 (462 aa).

It belongs to the TFB2 family. Component of the 7-subunit TFIIH core complex composed of XPB/ERCC3, XPD/ERCC2, GTF2H1, GTF2H2, GTF2H3, GTF2H4 and GTF2H5, which is active in NER. The core complex associates with the 3-subunit CDK-activating kinase (CAK) module composed of CCNH/cyclin H, CDK7 and MNAT1 to form the 10-subunit holoenzyme (holo-TFIIH) active in transcription. Part of TBP-based Pol II pre-initiation complex (PIC), in which Pol II core assembles with general transcription factors and other specific initiation factors including GTF2E1, GTF2E2, GTF2F1, GTF2F2, TCEA1, ERCC2, ERCC3, GTF2H2, GTF2H3, GTF2H4, GTF2H5, GTF2A1, GTF2A2, GTF2B and TBP; this large multi-subunit PIC complex mediates DNA unwinding and targets Pol II core to the transcription start site where the first phosphodiester bond forms.

It localises to the nucleus. Functionally, component of the general transcription and DNA repair factor IIH (TFIIH) core complex, which is involved in general and transcription-coupled nucleotide excision repair (NER) of damaged DNA and, when complexed to CAK, in RNA transcription by RNA polymerase II. In NER, TFIIH acts by opening DNA around the lesion to allow the excision of the damaged oligonucleotide and its replacement by a new DNA fragment. In transcription, TFIIH has an essential role in transcription initiation. When the pre-initiation complex (PIC) has been established, TFIIH is required for promoter opening and promoter escape. Phosphorylation of the C-terminal tail (CTD) of the largest subunit of RNA polymerase II by the kinase module CAK controls the initiation of transcription. Stimulates the ATPase activity of TFIIH subunit XPB/ERCC3. This is General transcription factor IIH subunit 4 (GTF2H4) from Homo sapiens (Human).